Reading from the N-terminus, the 194-residue chain is Adenylate kinase isoenzyme 1 (194 aa).

Met1 carries the N-acetylmethionine modification. 18–23 (GSGKGT) lines the ATP pocket. Ser38 is subject to Phosphoserine. An NMP region spans residues 38–67 (STGDLLRAEVSSGSARGKMLSEIMEKGQLV). AMP-binding positions include Thr39, Arg44, 65–67 (QLV), 94–97 (GYPR), and Gln101. The LID stretch occupies residues 131–141 (KRGETSGRVDD). Arg132 lines the ATP pocket. 2 residues coordinate AMP: Arg138 and Arg149. Gly177 contributes to the ATP binding site.

Belongs to the adenylate kinase family. AK1 subfamily. As to quaternary structure, monomer. Requires Mg(2+) as cofactor.

The protein localises to the cytoplasm. The catalysed reaction is a ribonucleoside 5'-phosphate + ATP = a ribonucleoside 5'-diphosphate + ADP. The enzyme catalyses AMP + ATP = 2 ADP. It catalyses the reaction dAMP + ATP = dADP + ADP. It carries out the reaction dATP + AMP = dADP + ADP. The catalysed reaction is dAMP + dATP = 2 dADP. The enzyme catalyses a 2'-deoxyribonucleoside 5'-diphosphate + ATP = a 2'-deoxyribonucleoside 5'-triphosphate + ADP. It catalyses the reaction a ribonucleoside 5'-diphosphate + ATP = a ribonucleoside 5'-triphosphate + ADP. It carries out the reaction CDP + GTP = CTP + GDP. The catalysed reaction is GDP + ATP = GTP + ADP. The enzyme catalyses UDP + ATP = UTP + ADP. It catalyses the reaction GTP + UDP = UTP + GDP. It carries out the reaction dTDP + GTP = dTTP + GDP. The catalysed reaction is dCDP + GTP = dCTP + GDP. The enzyme catalyses dGDP + ATP = dGTP + ADP. It catalyses the reaction dADP + GTP = dATP + GDP. It carries out the reaction thiamine diphosphate + ADP = thiamine triphosphate + AMP. In terms of biological role, catalyzes the reversible transfer of the terminal phosphate group between ATP and AMP. Also displays broad nucleoside diphosphate kinase activity. Plays an important role in cellular energy homeostasis and in adenine nucleotide metabolism. Also catalyzes at a very low rate the synthesis of thiamine triphosphate (ThTP) from thiamine diphosphate (ThDP) and ADP. In Sus scrofa (Pig), this protein is Adenylate kinase isoenzyme 1.